Consider the following 245-residue polypeptide: 1-(5-phosphoribosyl)-5-[(5-phosphoribosylamino)methylideneamino] imidazole-4-carboxamide isomerase (245 aa).

Catalysis depends on D8, which acts as the Proton acceptor. D131 serves as the catalytic Proton donor.

Belongs to the HisA/HisF family.

It is found in the cytoplasm. It catalyses the reaction 1-(5-phospho-beta-D-ribosyl)-5-[(5-phospho-beta-D-ribosylamino)methylideneamino]imidazole-4-carboxamide = 5-[(5-phospho-1-deoxy-D-ribulos-1-ylimino)methylamino]-1-(5-phospho-beta-D-ribosyl)imidazole-4-carboxamide. Its pathway is amino-acid biosynthesis; L-histidine biosynthesis; L-histidine from 5-phospho-alpha-D-ribose 1-diphosphate: step 4/9. The protein is 1-(5-phosphoribosyl)-5-[(5-phosphoribosylamino)methylideneamino] imidazole-4-carboxamide isomerase of Verminephrobacter eiseniae (strain EF01-2).